We begin with the raw amino-acid sequence, 164 residues long: Cytochrome c-type biogenesis protein CcmE (164 aa).

Topologically, residues 1 to 8 are cytoplasmic; that stretch reads MNPRRKSR. Residues 9–29 form a helical; Signal-anchor for type II membrane protein membrane-spanning segment; the sequence is LYLAMVVLIGISLTTTLVLYA. Over 30-164 the chain is Periplasmic; sequence LRSNIDLFYT…RGTNTTGNAL (135 aa). The heme site is built by His130 and Tyr134. The segment at 140 to 164 is disordered; the sequence is EEAMKENHSRPAAAYRGTNTTGNAL.

Belongs to the CcmE/CycJ family.

Its subcellular location is the cell inner membrane. Heme chaperone required for the biogenesis of c-type cytochromes. Transiently binds heme delivered by CcmC and transfers the heme to apo-cytochromes in a process facilitated by CcmF and CcmH. This Yersinia pseudotuberculosis serotype O:3 (strain YPIII) protein is Cytochrome c-type biogenesis protein CcmE.